The sequence spans 330 residues: Ribosomal RNA small subunit methyltransferase C (330 aa).

Belongs to the methyltransferase superfamily. RsmC family. In terms of assembly, monomer.

The protein resides in the cytoplasm. The enzyme catalyses guanosine(1207) in 16S rRNA + S-adenosyl-L-methionine = N(2)-methylguanosine(1207) in 16S rRNA + S-adenosyl-L-homocysteine + H(+). Specifically methylates the guanine in position 1207 of 16S rRNA in the 30S particle. This is Ribosomal RNA small subunit methyltransferase C from Haemophilus influenzae (strain PittGG).